The chain runs to 100 residues: NADH-quinone oxidoreductase subunit K (100 aa).

The next 3 membrane-spanning stretches (helical) occupy residues 4–24 (LTHG…GLVI), 28–48 (LLFM…AFVV), and 60–80 (IMYI…LALL).

This sequence belongs to the complex I subunit 4L family. NDH-1 is composed of 13 different subunits. Subunits NuoA, H, J, K, L, M, N constitute the membrane sector of the complex.

The protein localises to the cell inner membrane. It catalyses the reaction a quinone + NADH + 5 H(+)(in) = a quinol + NAD(+) + 4 H(+)(out). NDH-1 shuttles electrons from NADH, via FMN and iron-sulfur (Fe-S) centers, to quinones in the respiratory chain. The immediate electron acceptor for the enzyme in this species is believed to be ubiquinone. Couples the redox reaction to proton translocation (for every two electrons transferred, four hydrogen ions are translocated across the cytoplasmic membrane), and thus conserves the redox energy in a proton gradient. The protein is NADH-quinone oxidoreductase subunit K of Klebsiella pneumoniae (strain 342).